A 462-amino-acid chain; its full sequence is Transcription factor-like protein EUC1 (462 aa).

Disordered regions lie at residues 11-43 and 66-97; these read GFGG…TTSP and RPTD…GRIK. Phosphoserine is present on residues Ser17 and Ser23. Basic and acidic residues predominate over residues 26–35; the sequence is DSERRNHDLG. Residues 81–140 form a homodimerization region region; sequence SASATEPTNRIGPGRIKETPETNFNAFLIAQLTRMEEQNANLKEEISLMKKEQELFFLEN. Residues 105-135 are a coiled coil; the sequence is NAFLIAQLTRMEEQNANLKEEISLMKKEQEL. 2 disordered regions span residues 190-214 and 226-289; these read QEAA…STNW and GDPR…RNRR. The segment covering 197–214 has biased composition (polar residues); that stretch reads NPSTSTQAHQSQSRSTNW. Residue Lys231 forms a Glycyl lysine isopeptide (Lys-Gly) (interchain with G-Cter in SUMO) linkage. 2 positions are modified to phosphoserine: Ser237 and Ser249. Residues 240–251 are compositionally biased toward acidic residues; that stretch reads ENGEYDGNESDE. Residues 252 to 282 are compositionally biased toward polar residues; sequence NATTRNLPLNNPDSVSNADDSNNQLDGTGNE. Position 254 is a phosphothreonine (Thr254). Residues 296–385 form a GCR1 DNA-binding region region; it reads YKLNRAIQNV…QAIKVVENIR (90 aa). The segment covering 441–455 has biased composition (polar residues); that stretch reads SLQQPHSIPNSSTGT. The segment at 441–462 is disordered; that stretch reads SLQQPHSIPNSSTGTPEHDQDT.

Homodimer. Interacts with SLX5. Post-translationally, sumoylated at Lys-231 and subsequently ubiquitinated by the SUMO-targeted ubiquitin ligase (STUbL) complex SLX5/SLX8.

The protein localises to the chromosome. In terms of biological role, transcription factor-like protein that binds to specific DNA motifs called ub-HS-motif associated with several locations where proteins other than histone H2B are ubiquitinated (ub-hotspots). Ubiquitination at these sites depends on the SUMO-targeted ubiquitin ligase (STUbL) complex SLX5/SLX8 and protein turnover on the CDC48 segregase. UBC9, SIZ1, or SIZ2 sumoylate DNA-bound EUC1 to stabilize its DNA-binding. Sumoylated EUC1 acts a cofactor required for the recruitment of the SLX5/SLX8 STUbL complex via specific contacts between EUC1 and SLX5, as well as an additional SUMO-mediated interaction. SLX5/SLX8 then ubiquitinates EUC1 and presumably other targets at ub-hotspots, and the CDC48/UFD1/NPL4 complex, together with UBX4 and UBX5, removes Lys-48-linked ubiquitinated proteins from chromatin. Ubiquitinated proteins could be either degraded by the proteasome or recycled by deubiquitination. EUC1 itself does not seem to underlie extensive turnover, as it is a very stable protein. EUC1 is able to act as a transcription factor, but its function at ub-hotspots does not seem to depend on this ability. EUC1-mediated ub-hotspots are crucial during stress responses when gene expression control is impaired. This Saccharomyces cerevisiae (strain ATCC 204508 / S288c) (Baker's yeast) protein is Transcription factor-like protein EUC1.